Here is a 694-residue protein sequence, read N- to C-terminus: DNA primase (694 aa).

A CHC2-type zinc finger spans residues 41-65 (CPFHDDKSPSFTVSPAKQFYYCFSC). The region spanning 265-348 (DQAVVVEGYF…QGQVQLRVLN (84 aa)) is the Toprim domain. Mg(2+) is bound by residues glutamate 271, aspartate 317, and aspartate 319.

The protein belongs to the DnaG primase family. As to quaternary structure, monomer. Interacts with DnaB. Zn(2+) is required as a cofactor. Requires Mg(2+) as cofactor.

The catalysed reaction is ssDNA + n NTP = ssDNA/pppN(pN)n-1 hybrid + (n-1) diphosphate.. Its function is as follows. RNA polymerase that catalyzes the synthesis of short RNA molecules used as primers for DNA polymerase during DNA replication. The polypeptide is DNA primase (Synechococcus elongatus (strain ATCC 33912 / PCC 7942 / FACHB-805) (Anacystis nidulans R2)).